The chain runs to 275 residues: Exosome complex component Rrp42 (275 aa).

It belongs to the RNase PH family. Rrp42 subfamily. Component of the archaeal exosome complex. Forms a hexameric ring-like arrangement composed of 3 Rrp41-Rrp42 heterodimers. The hexameric ring associates with a trimer of Rrp4 and/or Csl4 subunits.

It localises to the cytoplasm. Functionally, non-catalytic component of the exosome, which is a complex involved in RNA degradation. Contributes to the structuring of the Rrp41 active site. The protein is Exosome complex component Rrp42 of Saccharolobus solfataricus (strain ATCC 35092 / DSM 1617 / JCM 11322 / P2) (Sulfolobus solfataricus).